Here is a 373-residue protein sequence, read N- to C-terminus: Chaperone protein DnaJ (373 aa).

The 66-residue stretch at Asp-5–Gly-70 folds into the J domain. Residues Gly-133–Asn-211 form a CR-type zinc finger. Positions 146, 149, 163, 166, 185, 188, 199, and 202 each coordinate Zn(2+). CXXCXGXG motif repeat units follow at residues Cys-146–Gly-153, Cys-163–Gly-170, Cys-185–Gly-192, and Cys-199–Gly-206.

The protein belongs to the DnaJ family. As to quaternary structure, homodimer. It depends on Zn(2+) as a cofactor.

The protein localises to the cytoplasm. Functionally, participates actively in the response to hyperosmotic and heat shock by preventing the aggregation of stress-denatured proteins and by disaggregating proteins, also in an autonomous, DnaK-independent fashion. Unfolded proteins bind initially to DnaJ; upon interaction with the DnaJ-bound protein, DnaK hydrolyzes its bound ATP, resulting in the formation of a stable complex. GrpE releases ADP from DnaK; ATP binding to DnaK triggers the release of the substrate protein, thus completing the reaction cycle. Several rounds of ATP-dependent interactions between DnaJ, DnaK and GrpE are required for fully efficient folding. Also involved, together with DnaK and GrpE, in the DNA replication of plasmids through activation of initiation proteins. This chain is Chaperone protein DnaJ, found in Bordetella bronchiseptica (strain ATCC BAA-588 / NCTC 13252 / RB50) (Alcaligenes bronchisepticus).